The following is a 297-amino-acid chain: Protein-L-isoaspartate O-methyltransferase (297 aa).

Residues 20–57 (RKPAPARTAGMPAVGAPGPAQAQAKARDKQPSAPTAAA) form a disordered region. Residues 28–43 (AGMPAVGAPGPAQAQA) are compositionally biased toward low complexity. The active site involves serine 133.

It belongs to the methyltransferase superfamily. L-isoaspartyl/D-aspartyl protein methyltransferase family.

The protein localises to the cytoplasm. The catalysed reaction is [protein]-L-isoaspartate + S-adenosyl-L-methionine = [protein]-L-isoaspartate alpha-methyl ester + S-adenosyl-L-homocysteine. Catalyzes the methyl esterification of L-isoaspartyl residues in peptides and proteins that result from spontaneous decomposition of normal L-aspartyl and L-asparaginyl residues. It plays a role in the repair and/or degradation of damaged proteins. In Cupriavidus pinatubonensis (strain JMP 134 / LMG 1197) (Cupriavidus necator (strain JMP 134)), this protein is Protein-L-isoaspartate O-methyltransferase.